Here is a 287-residue protein sequence, read N- to C-terminus: Uroplakin-3a (287 aa).

Residues 1–18 (MLLLWALLALGCLRCGWT) form the signal peptide. The Lumenal segment spans residues 19-207 (VNLQPQLASV…DTWPGRRSGG (189 aa)). N-linked (GlcNAc...) asparagine glycosylation is found at N74, N139, and N170. Residues 208–235 (MIVITSILGSLPFFLLVGFAGAIILSFV) traverse the membrane as a helical segment. The Cytoplasmic segment spans residues 236–287 (DMGSSDGEMTHDSQITQEAVPKTLGTSEPSYSSVNRGPPLDRAEVFSSKLQD). The interval 243 to 287 (EMTHDSQITQEAVPKTLGTSEPSYSSVNRGPPLDRAEVFSSKLQD) is disordered. The segment covering 259–270 (LGTSEPSYSSVN) has biased composition (polar residues).

The protein belongs to the uroplakin-3 family. As to quaternary structure, heterodimer with uroplakin-1B (UPK1B).

It is found in the endoplasmic reticulum membrane. In terms of biological role, component of the asymmetric unit membrane (AUM); a highly specialized biomembrane elaborated by terminally differentiated urothelial cells. May play an important role in AUM-cytoskeleton interaction in terminally differentiated urothelial cells. It also contributes to the formation of urothelial glycocalyx which may play an important role in preventing bacterial adherence. The polypeptide is Uroplakin-3a (Upk3a) (Mus musculus (Mouse)).